A 409-amino-acid chain; its full sequence is Tyrosine--tRNA ligase (409 aa).

A 'HIGH' region motif is present at residues 54 to 63 (PTAPDIHLGH). Residues 238-242 (KMSKS) carry the 'KMSKS' region motif. Residue Lys-241 participates in ATP binding. The 61-residue stretch at 347–407 (QGILRILREA…GKRKFARVKL (61 aa)) folds into the S4 RNA-binding domain.

Belongs to the class-I aminoacyl-tRNA synthetase family. TyrS type 2 subfamily. As to quaternary structure, homodimer.

Its subcellular location is the cytoplasm. It carries out the reaction tRNA(Tyr) + L-tyrosine + ATP = L-tyrosyl-tRNA(Tyr) + AMP + diphosphate + H(+). Functionally, catalyzes the attachment of tyrosine to tRNA(Tyr) in a two-step reaction: tyrosine is first activated by ATP to form Tyr-AMP and then transferred to the acceptor end of tRNA(Tyr). This chain is Tyrosine--tRNA ligase, found in Bordetella bronchiseptica (strain ATCC BAA-588 / NCTC 13252 / RB50) (Alcaligenes bronchisepticus).